The following is a 131-amino-acid chain: Insulin-like 3 (131 aa).

The N-terminal stretch at 1–20 is a signal peptide; the sequence is MDPRLPAWALVLLGPALVFA. Disulfide bonds link cysteine 34–cysteine 116, cysteine 46–cysteine 129, and cysteine 115–cysteine 120. Positions 58–104 are cleaved as a propeptide — c peptide like; sequence PATGGDRELLQWLERRHLLHGLVADSNLTLGPGLQPLPQTSHHHRHH.

The protein belongs to the insulin family. Heterodimer of a B chain and an A chain linked by two disulfide bonds. As to expression, expressed in prenatal and postnatal Leydig cells. Found as well in the corpus luteum, trophoblast, fetal membranes and breast.

It localises to the secreted. In terms of biological role, seems to play a role in testicular function. May be a trophic hormone with a role in testicular descent in fetal life. Is a ligand for LGR8 receptor. The sequence is that of Insulin-like 3 (INSL3) from Homo sapiens (Human).